We begin with the raw amino-acid sequence, 388 residues long: MKSLSLLALAAIAPPAAVAAVVDRQVPFENRPVQGLPEKFLIQLGPEQTRWVTEDEKWALKMEGVNFFDITAEPDRGFSAKSHERIQVSFPSEVKHQTELAPLLEQLSKDNMRQNLVHFTSFHTRYYKSETGVQSATWLFEQVEEAIQDSGAAQHAVKVERFEHSWGQFSIIATIPGRTNKTVVIGAHQDSINLFLPSILPAPGADDDGSGTVTILEAFRVLLQSEAVQQGNAANTIEFHWYSAEEAGLLGSQAIFSDYSKTGRDIKAMLQQDMTGYVEGTTKAGEVESVGVITDFVDPGLTEFIKRVITGYCTIPFVLTQCGYACSDHASASRYGYPSAFVIESEFKRSNQRIHTTGDTVDLLSFDHMLQHARMTLAFAYELAFAEL.

Positions M1 to A19 are cleaved as a signal peptide. Positions A20 to V88 are excised as a propeptide. Residue N180 is glycosylated (N-linked (GlcNAc...) asparagine). 4 residues coordinate Zn(2+): H188, D207, E246, and D273. The cysteines at positions 322 and 326 are disulfide-linked. Residue H355 coordinates Zn(2+).

The protein belongs to the peptidase M28 family. M28E subfamily. Monomer. Zn(2+) serves as cofactor.

It is found in the secreted. Functionally, extracellular aminopeptidase that allows assimilation of proteinaceous substrates. The protein is Leucine aminopeptidase 1 (LAP1) of Coccidioides posadasii (strain C735) (Valley fever fungus).